The primary structure comprises 113 residues: Colicin-E1* immunity protein (113 aa).

This protein is able to protect a cell, which harbors the plasmid pKY-1 encoding colicin E1*, against colicin E1*. This is Colicin-E1* immunity protein (imm) from Shigella sonnei.